Here is a 494-residue protein sequence, read N- to C-terminus: MSDLNALTIADARDALRKGEVTSVDLTQACLSAIDQADALGTFVHKTPDLALERAKAADARIAEGDAPDMCGIPVGIKDLFCTEGVPSQAASRILDGFKPEYESTVSGKLRDAGAVMLGKLNMDEFAMGSSNETSVYGNAVNPWRAGNSDAALTPGGSSGGSASAVAGDLCLAATGTDTGGSIRQPAAFTGIVGLKPTYGRCSRWGIVAFASSLDQAGPMTKTVRDAAIMGRAMMGYDAKDSTSANIDVPDFEAMLTGDIRGKIIGIPKEYRMDGMPDEIETLWADGTAMLKDAGAVIRDISLPHTKYALPAYYVIAPAEASSNLARYDGVRFGYRADMAPGDGITEMYEKTRAEGFGPEVQRRVMIGTYVLSAGFYDAYYNRARRVRALIKRDFDEVFAAGVDAILTPATPSAAFELGKEVSDPVEMYLNDVFTVTVNLAGLPGVAVPTGVDRNGLPLGLQLIGKPWEEGELLNTAYALEAAAGFVAKPARWW.

Residues K78 and S158 each act as charge relay system in the active site. Residue S182 is the Acyl-ester intermediate of the active site.

The protein belongs to the amidase family. GatA subfamily. As to quaternary structure, heterotrimer of A, B and C subunits.

It carries out the reaction L-glutamyl-tRNA(Gln) + L-glutamine + ATP + H2O = L-glutaminyl-tRNA(Gln) + L-glutamate + ADP + phosphate + H(+). Functionally, allows the formation of correctly charged Gln-tRNA(Gln) through the transamidation of misacylated Glu-tRNA(Gln) in organisms which lack glutaminyl-tRNA synthetase. The reaction takes place in the presence of glutamine and ATP through an activated gamma-phospho-Glu-tRNA(Gln). In Jannaschia sp. (strain CCS1), this protein is Glutamyl-tRNA(Gln) amidotransferase subunit A.